The sequence spans 276 residues: Tryptophan synthase alpha chain (276 aa).

Active-site proton acceptor residues include glutamate 49 and aspartate 60.

Belongs to the TrpA family. In terms of assembly, tetramer of two alpha and two beta chains.

The catalysed reaction is (1S,2R)-1-C-(indol-3-yl)glycerol 3-phosphate + L-serine = D-glyceraldehyde 3-phosphate + L-tryptophan + H2O. Its pathway is amino-acid biosynthesis; L-tryptophan biosynthesis; L-tryptophan from chorismate: step 5/5. Its function is as follows. The alpha subunit is responsible for the aldol cleavage of indoleglycerol phosphate to indole and glyceraldehyde 3-phosphate. The sequence is that of Tryptophan synthase alpha chain from Acidiphilium cryptum (strain JF-5).